Reading from the N-terminus, the 246-residue chain is FAD synthetase (246 aa).

It belongs to the RibF family.

It catalyses the reaction FMN + ATP + H(+) = FAD + diphosphate. It functions in the pathway cofactor biosynthesis; FAD biosynthesis; FAD from FMN: step 1/1. Its function is as follows. Catalyzes the adenylation of flavin mononucleotide (FMN) to form flavin adenine dinucleotide (FAD) coenzyme. Can also catalyze, with lower efficiency, the adenylation of the toxic riboflavin analogs 8-demethyl-8-aminoriboflavin mononucleotide (AFMN) and roseoflavin mononucleotide (RoFMN) to 8-demethyl-8-aminoriboflavin adenine dinucleotide (AFAD) and roseoflavin adenine dinucleotide (RoFAD), respectively. The chain is FAD synthetase from Listeria monocytogenes serovar 1/2a (strain ATCC BAA-679 / EGD-e).